Here is a 612-residue protein sequence, read N- to C-terminus: Dihydroxy-acid dehydratase (612 aa).

Residue aspartate 81 coordinates Mg(2+). Cysteine 122 provides a ligand contact to [2Fe-2S] cluster. Aspartate 123 and lysine 124 together coordinate Mg(2+). Position 124 is an N6-carboxylysine (lysine 124). [2Fe-2S] cluster is bound at residue cysteine 195. Mg(2+) is bound at residue glutamate 491. Serine 517 acts as the Proton acceptor in catalysis.

This sequence belongs to the IlvD/Edd family. As to quaternary structure, homodimer. It depends on [2Fe-2S] cluster as a cofactor. The cofactor is Mg(2+).

The enzyme catalyses (2R)-2,3-dihydroxy-3-methylbutanoate = 3-methyl-2-oxobutanoate + H2O. The catalysed reaction is (2R,3R)-2,3-dihydroxy-3-methylpentanoate = (S)-3-methyl-2-oxopentanoate + H2O. It functions in the pathway amino-acid biosynthesis; L-isoleucine biosynthesis; L-isoleucine from 2-oxobutanoate: step 3/4. The protein operates within amino-acid biosynthesis; L-valine biosynthesis; L-valine from pyruvate: step 3/4. In terms of biological role, functions in the biosynthesis of branched-chain amino acids. Catalyzes the dehydration of (2R,3R)-2,3-dihydroxy-3-methylpentanoate (2,3-dihydroxy-3-methylvalerate) into 2-oxo-3-methylpentanoate (2-oxo-3-methylvalerate) and of (2R)-2,3-dihydroxy-3-methylbutanoate (2,3-dihydroxyisovalerate) into 2-oxo-3-methylbutanoate (2-oxoisovalerate), the penultimate precursor to L-isoleucine and L-valine, respectively. The sequence is that of Dihydroxy-acid dehydratase from Haemophilus influenzae (strain 86-028NP).